The following is a 233-amino-acid chain: Biosynthetic peptidoglycan transglycosylase (233 aa).

The helical transmembrane segment at 8-28 (LIALPVGIFIFFNAYVYGNII) threads the bilayer.

This sequence belongs to the glycosyltransferase 51 family.

The protein resides in the cell inner membrane. The enzyme catalyses [GlcNAc-(1-&gt;4)-Mur2Ac(oyl-L-Ala-gamma-D-Glu-L-Lys-D-Ala-D-Ala)](n)-di-trans,octa-cis-undecaprenyl diphosphate + beta-D-GlcNAc-(1-&gt;4)-Mur2Ac(oyl-L-Ala-gamma-D-Glu-L-Lys-D-Ala-D-Ala)-di-trans,octa-cis-undecaprenyl diphosphate = [GlcNAc-(1-&gt;4)-Mur2Ac(oyl-L-Ala-gamma-D-Glu-L-Lys-D-Ala-D-Ala)](n+1)-di-trans,octa-cis-undecaprenyl diphosphate + di-trans,octa-cis-undecaprenyl diphosphate + H(+). The protein operates within cell wall biogenesis; peptidoglycan biosynthesis. In terms of biological role, peptidoglycan polymerase that catalyzes glycan chain elongation from lipid-linked precursors. The sequence is that of Biosynthetic peptidoglycan transglycosylase from Neisseria meningitidis serogroup A / serotype 4A (strain DSM 15465 / Z2491).